Here is a 216-residue protein sequence, read N- to C-terminus: Probable GTP-binding protein EngB (216 aa).

The EngB-type G domain occupies 37–214 (AGLEVAFAGR…RAAMIKLIAE (178 aa)). GTP-binding positions include 45-52 (GRSNVGKS), 72-76 (GRTQE), 92-95 (DMPG), 159-162 (TKAD), and 193-195 (TSS). Mg(2+) is bound by residues Ser-52 and Thr-74.

This sequence belongs to the TRAFAC class TrmE-Era-EngA-EngB-Septin-like GTPase superfamily. EngB GTPase family. Mg(2+) is required as a cofactor.

Functionally, necessary for normal cell division and for the maintenance of normal septation. The protein is Probable GTP-binding protein EngB of Rhodopseudomonas palustris (strain BisB18).